Consider the following 74-residue polypeptide: Conotoxin Vc6.11 (74 aa).

Positions 1-19 are cleaved as a signal peptide; the sequence is MEKLTILLLVAAVLMSTQA. Residues 20-41 constitute a propeptide that is removed on maturation; that stretch reads LIQEQRQKAKINLFSKRKPSAE. 2 cysteine pairs are disulfide-bonded: Cys-55–Cys-66 and Cys-61–Cys-71.

Belongs to the conotoxin O2 superfamily. In terms of tissue distribution, expressed by the venom duct.

The protein resides in the secreted. Functionally, inhibits voltage-gated ion channels. The chain is Conotoxin Vc6.11 from Conus victoriae (Queen Victoria cone).